The sequence spans 534 residues: Probable DNA ligase (534 aa).

Glu213 lines the ATP pocket. The active-site N6-AMP-lysine intermediate is Lys215. ATP contacts are provided by Arg220, Arg235, Glu264, Phe303, Arg375, and Lys381.

This sequence belongs to the ATP-dependent DNA ligase family. It depends on Mg(2+) as a cofactor.

The catalysed reaction is ATP + (deoxyribonucleotide)n-3'-hydroxyl + 5'-phospho-(deoxyribonucleotide)m = (deoxyribonucleotide)n+m + AMP + diphosphate.. DNA ligase that seals nicks in double-stranded DNA during DNA replication, DNA recombination and DNA repair. The chain is Probable DNA ligase from Mycolicibacterium vanbaalenii (strain DSM 7251 / JCM 13017 / BCRC 16820 / KCTC 9966 / NRRL B-24157 / PYR-1) (Mycobacterium vanbaalenii).